We begin with the raw amino-acid sequence, 327 residues long: tRNA dimethylallyltransferase (327 aa).

Residue 14 to 21 participates in ATP binding; it reads GPTASGKT. 16–21 serves as a coordination point for substrate; sequence TASGKT. Interaction with substrate tRNA stretches follow at residues 39-42 and 163-167; these read DSAL and QRIQR.

The protein belongs to the IPP transferase family. Monomer. The cofactor is Mg(2+).

The catalysed reaction is adenosine(37) in tRNA + dimethylallyl diphosphate = N(6)-dimethylallyladenosine(37) in tRNA + diphosphate. Catalyzes the transfer of a dimethylallyl group onto the adenine at position 37 in tRNAs that read codons beginning with uridine, leading to the formation of N6-(dimethylallyl)adenosine (i(6)A). The protein is tRNA dimethylallyltransferase of Xanthomonas oryzae pv. oryzae (strain MAFF 311018).